Consider the following 405-residue polypeptide: Putative colanic acid polymerase (405 aa).

11 helical membrane-spanning segments follow: residues 5 to 25, 27 to 47, 55 to 75, 81 to 101, 117 to 137, 171 to 191, 204 to 224, 244 to 264, 282 to 302, 327 to 347, and 376 to 396; these read IRICSYLLLPLIYLLVNVKIA, LGESFPITIVTFLPVLLLLFL, LMIALGIGAGLTAFNYLFGQS, YVTSTMLFVYIVIIIGMVWSI, FFYLVVGLVVALAAVEMAQII, TALYFEPAFFALALISIWLSI, MILAGIILSGSFSGVMTFILF, PLALISLAVFLVGVVIAFPYI, IVGPLVMVGYSLTHIDGVVRF, GLYLLIIYFSWFAVFLSLWYM, and LFFTGSIFSPEYAFLIVCPFI.

It localises to the cell inner membrane. It functions in the pathway slime biogenesis; slime polysaccharide biosynthesis. The chain is Putative colanic acid polymerase (wcaD) from Escherichia coli (strain K12).